Consider the following 183-residue polypeptide: Streptavidin (183 aa).

The N-terminal stretch at 1–24 is a signal peptide; the sequence is MRKIVVAAIAVSLTTVSITASASA. In terms of domain architecture, Avidin-like spans 37 to 159; the sequence is AEAGITGTWY…GHDTFTKVKP (123 aa). Biotin-binding residues include Tyr67 and Tyr78. The Cell attachment site; atypical signature appears at 83–85; sequence RYD. Trp116, Trp132, and Trp144 together coordinate biotin.

The protein belongs to the avidin/streptavidin family. In terms of assembly, homotetramer.

It localises to the secreted. In terms of biological role, the biological function of streptavidin is not known. Forms a strong non-covalent specific complex with biotin (one molecule of biotin per subunit of streptavidin). This is Streptavidin from Streptomyces avidinii.